Consider the following 191-residue polypeptide: CASP-like protein 4C2 (191 aa).

Over 1–29 (MEAADSATNNSKDTHFYGKSRAENRRRSD) the chain is Cytoplasmic. A helical transmembrane segment spans residues 30–50 (AMLLLFRALTFSFSLAAVVVM). Topologically, residues 51–72 (GTNRYRINPQLKVSWYDFEPYR) are extracellular. A helical transmembrane segment spans residues 73–93 (YVLAVNAIICIYSFVETWLAV). Topologically, residues 94 to 116 (YTYLQGSYLLPEIFQVWFDYGHD) are cytoplasmic. The helical transmembrane segment at 117-137 (QGFAYLLFSANSAGVAMAQLL) threads the bilayer. Residues 138-161 (QSGNTLIHGAYHCTEAGGYCTQAR) are Extracellular-facing. Residues 162–182 (VSIALGFVAFLFLALSSLLTG) traverse the membrane as a helical segment. Over 183–191 (LRVARWYLR) the chain is Cytoplasmic.

The protein belongs to the Casparian strip membrane proteins (CASP) family. As to quaternary structure, homodimer and heterodimers.

The protein localises to the cell membrane. This chain is CASP-like protein 4C2, found in Physcomitrium patens (Spreading-leaved earth moss).